Reading from the N-terminus, the 596-residue chain is Aspartate--tRNA(Asp/Asn) ligase (596 aa).

Glutamate 175 serves as a coordination point for L-aspartate. The interval 199–202 is aspartate; it reads QMFK. L-aspartate is bound by residues arginine 221 and histidine 451. 221–223 provides a ligand contact to ATP; the sequence is RDE. Glutamate 485 serves as a coordination point for ATP. Arginine 492 provides a ligand contact to L-aspartate. 537–540 provides a ligand contact to ATP; sequence GVDR.

Belongs to the class-II aminoacyl-tRNA synthetase family. Type 1 subfamily. As to quaternary structure, homodimer.

It is found in the cytoplasm. It carries out the reaction tRNA(Asx) + L-aspartate + ATP = L-aspartyl-tRNA(Asx) + AMP + diphosphate. In terms of biological role, aspartyl-tRNA synthetase with relaxed tRNA specificity since it is able to aspartylate not only its cognate tRNA(Asp) but also tRNA(Asn). Reaction proceeds in two steps: L-aspartate is first activated by ATP to form Asp-AMP and then transferred to the acceptor end of tRNA(Asp/Asn). In Zymomonas mobilis subsp. mobilis (strain ATCC 31821 / ZM4 / CP4), this protein is Aspartate--tRNA(Asp/Asn) ligase.